Here is a 418-residue protein sequence, read N- to C-terminus: Equilibrative nucleotide transporter 3 (418 aa).

The next 11 helical transmembrane spans lie at 20-40, 56-76, 86-106, 112-132, 142-162, 186-206, 264-284, 291-311, 326-346, 353-373, and 392-412; these read MVVC…MLTI, VLTL…AYHE, LIGY…DLAT, IGPY…DATV, LMCP…GALT, MFLA…AYVF, YAVN…GFLY, GLGD…DLVG, KLIT…YFTA, WMIM…VCIM, and LVIF…LWLI.

This sequence belongs to the SLC29A/ENT transporter (TC 2.A.57) family. As to expression, expressed in root tips, vasculature of roots and leaves, and meristems of leaf primordia. Expressed in flowers and siliques.

Its subcellular location is the cell membrane. Functionally, nucleoside transporter that functions as a pyrimidine nucleoside carrier in all organs. Has high affinity for adenosine and uridine when expressed in a heterologous system (yeast). Mediates proton-dependent adenosine or uridine transport in Xenopus oocytes. The sequence is that of Equilibrative nucleotide transporter 3 from Arabidopsis thaliana (Mouse-ear cress).